Reading from the N-terminus, the 257-residue chain is NAD-capped RNA hydrolase NudC (257 aa).

Residues Lys25 and Arg69 each contribute to the substrate site. Zn(2+)-binding residues include Cys98 and Cys101. Residue Glu111 coordinates substrate. Zn(2+) contacts are provided by Cys116 and Cys119. A substrate-binding site is contributed by Tyr124. The Nudix hydrolase domain maps to 125 to 248; that stretch reads PQIAPCIIVA…TVARRLIEDT (124 aa). 3 residues coordinate a divalent metal cation: Ala158, Glu174, and Glu178. The Nudix box signature appears at 159-180; it reads GFVEVGETLEQAVAREVMEESG. 192–199 contacts substrate; the sequence is QPWPFPQS. Residue Glu219 coordinates a divalent metal cation. Ala241 contributes to the substrate binding site.

Belongs to the Nudix hydrolase family. NudC subfamily. In terms of assembly, homodimer. Mg(2+) serves as cofactor. It depends on Mn(2+) as a cofactor. The cofactor is Zn(2+).

It carries out the reaction a 5'-end NAD(+)-phospho-ribonucleoside in mRNA + H2O = a 5'-end phospho-adenosine-phospho-ribonucleoside in mRNA + beta-nicotinamide D-ribonucleotide + 2 H(+). It catalyses the reaction NAD(+) + H2O = beta-nicotinamide D-ribonucleotide + AMP + 2 H(+). The enzyme catalyses NADH + H2O = reduced beta-nicotinamide D-ribonucleotide + AMP + 2 H(+). MRNA decapping enzyme that specifically removes the nicotinamide adenine dinucleotide (NAD) cap from a subset of mRNAs by hydrolyzing the diphosphate linkage to produce nicotinamide mononucleotide (NMN) and 5' monophosphate mRNA. The NAD-cap is present at the 5'-end of some mRNAs and stabilizes RNA against 5'-processing. Has preference for mRNAs with a 5'-end purine. Catalyzes the hydrolysis of a broad range of dinucleotide pyrophosphates. This Shigella boydii serotype 18 (strain CDC 3083-94 / BS512) protein is NAD-capped RNA hydrolase NudC.